The chain runs to 200 residues: Recombination protein RecR (200 aa).

The C4-type zinc finger occupies 57–72 (CSECRTFTEEDTCAIC). Residues 81-176 (GEMCIVESPA…PASRIAHGVP (96 aa)) form the Toprim domain.

This sequence belongs to the RecR family.

Functionally, may play a role in DNA repair. It seems to be involved in an RecBC-independent recombinational process of DNA repair. It may act with RecF and RecO. In Aliivibrio fischeri (strain ATCC 700601 / ES114) (Vibrio fischeri), this protein is Recombination protein RecR.